We begin with the raw amino-acid sequence, 412 residues long: Citrate synthase (412 aa).

Catalysis depends on residues His-305 and Asp-364.

This sequence belongs to the citrate synthase family.

The enzyme catalyses oxaloacetate + acetyl-CoA + H2O = citrate + CoA + H(+). Its pathway is carbohydrate metabolism; tricarboxylic acid cycle; isocitrate from oxaloacetate: step 1/2. This chain is Citrate synthase (gltA), found in Rickettsia bellii.